The following is a 1454-amino-acid chain: ABC transporter G family member 39 (1454 aa).

The ABC transporter 1 domain maps to 175-448 (LGFFHLLPSK…FEYFGFQCPE (274 aa)). 208 to 215 (GPPSSGKT) contacts ATP. The ABC transmembrane type-2 1 domain maps to 526–739 (ELFKACFDRE…GQTAIVMNEF (214 aa)). Transmembrane regions (helical) follow at residues 544 to 564 (FVYVFKTVQITIMSLITMTVY), 584 to 604 (MFFSLINVMFNGLAELAFTVM), 623 to 643 (FALPAWLLKIPLSLIESGIWI), 663 to 683 (LLAYFCVNQMALSLFRFLGAI), 689 to 709 (ISNSIGTFTLLIVFTLGGFII), 716 to 736 (PWMTWAYYMSPMMYGQTAIVM), and 775 to 795 (FWICIVALLGFSLLFNLFYIL). Residues 812 to 824 (EEGKDKQKGENRG) are compositionally biased toward basic and acidic residues. Residues 812–838 (EEGKDKQKGENRGTEGSVVELNSSSNK) are disordered. Residues 853–1106 (LAFNNVNYYV…LVEYFEAVEG (254 aa)) enclose the ABC transporter 2 domain. ATP is bound at residue 898 to 905 (GVSGAGKT). In terms of domain architecture, ABC transmembrane type-2 2 spans 1178–1392 (TQTKACFWKQ…TLYGLITSQV (215 aa)). The next 7 helical transmembrane spans lie at 1199–1219 (AIRFLMTVVIGVLFGLIFWQI), 1231–1251 (NFFGAMYAAVLFLGALNAATV), 1285–1303 (IMYNTIQTGVYTLILYSMI), 1312–1332 (FLWFYYYMLTSFIYFTLYGMM), 1342–1362 (IAGICMSFFLSLWNLFSGFLI), 1367–1387 (IPIWWRWYYWATPVAWTLYGL), and 1423–1443 (FLPVVAVVHIAWILLFLFVFA).

This sequence belongs to the ABC transporter superfamily. ABCG family. PDR (TC 3.A.1.205) subfamily.

It is found in the membrane. Functionally, may be a general defense protein. This is ABC transporter G family member 39 (ABCG39) from Arabidopsis thaliana (Mouse-ear cress).